The primary structure comprises 118 residues: MDISGHPKTRTRTIFDEVDEPVWFCCVLPIWVGEEMASGWGITGNKGRCYDFWMDFSECMSHCREPKDCTLLREDYLECLHHSKEFQRRNRIYKEEQRKLRAASRKGEEAGDGTHNHH.

The 42-residue stretch at 46 to 87 (KGRCYDFWMDFSECMSHCREPKDCTLLREDYLECLHHSKEFQ) folds into the CHCH domain. 2 short sequence motifs (cx9C motif) span residues 49-59 (CYDFWMDFSEC) and 69-79 (CTLLREDYLEC). 2 disulfides stabilise this stretch: cysteine 49/cysteine 79 and cysteine 59/cysteine 69. A disordered region spans residues 98–118 (RKLRAASRKGEEAGDGTHNHH).

This sequence belongs to the complex I NDUFS5 subunit family. Complex I is composed of at least 49 different subunits. This is a component of the iron-sulfur (IP) fragment of the enzyme.

The protein resides in the mitochondrion. It is found in the mitochondrion inner membrane. It localises to the mitochondrion intermembrane space. In terms of biological role, accessory subunit of the mitochondrial membrane respiratory chain NADH dehydrogenase (Complex I), that is believed not to be involved in catalysis. Complex I functions in the transfer of electrons from NADH to the respiratory chain. The immediate electron acceptor for the enzyme is believed to be ubiquinone. This is NADH dehydrogenase [ubiquinone] iron-sulfur protein 5-A from Arabidopsis thaliana (Mouse-ear cress).